The primary structure comprises 502 residues: uncharacterized protein (502 aa).

3 stretches are compositionally biased toward low complexity: residues 1-10, 28-47, and 155-171; these read MQSTTNNNTN, SNRS…NNLS, and NTED…SVNS. 4 disordered regions span residues 1–57, 155–181, 212–362, and 438–487; these read MQST…VISY, NTED…LSAR, SLGN…TDKF, and TIDQ…TSNL. A compositionally biased stretch (polar residues) spans 212–230; sequence SLGNSERNSPDRPSTQGDS. Composition is skewed to low complexity over residues 242-290 and 309-327; these read RNAS…SSRN and SNKN…TSIK. A compositionally biased stretch (polar residues) spans 339–348; it reads QTNKSKNQRG. The span at 446-460 shows a compositional bias: low complexity; the sequence is TSDKNNSTKSNTKYN. Over residues 470–487 the composition is skewed to polar residues; that stretch reads SYGTSKRSHNRSSNTSNL.

The protein resides in the virion. This is an uncharacterized protein from Acanthamoeba polyphaga (Amoeba).